The following is a 435-amino-acid chain: Trigger factor (435 aa).

The PPIase FKBP-type domain maps to 163–248 (GDYVTFDFKG…IKEIKVKELP (86 aa)).

The protein belongs to the FKBP-type PPIase family. Tig subfamily.

The protein resides in the cytoplasm. The catalysed reaction is [protein]-peptidylproline (omega=180) = [protein]-peptidylproline (omega=0). Functionally, involved in protein export. Acts as a chaperone by maintaining the newly synthesized protein in an open conformation. Functions as a peptidyl-prolyl cis-trans isomerase. The protein is Trigger factor of Geotalea daltonii (strain DSM 22248 / JCM 15807 / FRC-32) (Geobacter daltonii).